The primary structure comprises 217 residues: Adenylate kinase (217 aa).

ATP is bound at residue 10–15; the sequence is GAGKGT. The segment at 30–59 is NMP; the sequence is STGDIFRQNLRDNTDLGKLAKEYMDKGLLV. AMP is bound by residues T31, R36, 57–59, 85–88, and Q92; these read LLV and GYPR. The segment at 126 to 163 is LID; it reads GRRVCPNCGATYHIKTSPPAVDNVCDKCGAQLIQRSDD. R127 contributes to the ATP binding site. Positions 130 and 133 each coordinate Zn(2+). ATP is bound at residue 136-137; the sequence is TY. The Zn(2+) site is built by C150 and C153. AMP is bound by residues R160 and R171. K199 provides a ligand contact to ATP.

This sequence belongs to the adenylate kinase family. Monomer.

The protein resides in the cytoplasm. It catalyses the reaction AMP + ATP = 2 ADP. It participates in purine metabolism; AMP biosynthesis via salvage pathway; AMP from ADP: step 1/1. Functionally, catalyzes the reversible transfer of the terminal phosphate group between ATP and AMP. Plays an important role in cellular energy homeostasis and in adenine nucleotide metabolism. In Thermoanaerobacter pseudethanolicus (strain ATCC 33223 / 39E) (Clostridium thermohydrosulfuricum), this protein is Adenylate kinase.